The chain runs to 193 residues: Cysteine and glycine-rich protein 2 (193 aa).

Residues 10-61 enclose the LIM zinc-binding 1 domain; that stretch reads CGACGRTVYHAEEVQCDGRSFHRCCFLCMVCRKNLDSTTVAIHDEEIYCKSC. Residues 64–69 carry the Nuclear localization signal motif; it reads KKYGPK. A Glycyl lysine isopeptide (Lys-Gly) (interchain with G-Cter in SUMO2) cross-link involves residue K91. N6-acetyllysine is present on residues K112 and K131. An LIM zinc-binding 2 domain is found at 119–170; the sequence is CSRCGDSVYAAEKIIGAGKPWHKNCFRCAKCGKSLESTTLTEKEGEIYCKGC. K137 carries the N6-acetyllysine; alternate modification. Position 137 is an N6-succinyllysine; alternate (K137). Residue K161 is modified to N6-acetyllysine.

Interacts with KAT14. The LIM domain 1 is necessary and sufficient for this interaction. Interacts with GLRX3.

It is found in the nucleus. Functionally, drastically down-regulated in response to PDGF-BB or cell injury, that promote smooth muscle cell proliferation and dedifferentiation. Seems to play a role in the development of the embryonic vascular system. The sequence is that of Cysteine and glycine-rich protein 2 (CSRP2) from Bos taurus (Bovine).